A 414-amino-acid polypeptide reads, in one-letter code: Glycogen synthase (414 aa).

It belongs to the glycosyltransferase group 1 family.

The catalysed reaction is [(1-&gt;4)-alpha-D-glucosyl](n) + UDP-alpha-D-glucose = [(1-&gt;4)-alpha-D-glucosyl](n+1) + UDP + H(+). The protein operates within glycan biosynthesis; glycogen biosynthesis. Functionally, glucosyltransferase that uses UDP-glucose as the sugar donor to elongate alpha-(1-&gt;4)-glucans. Is involved in the biosynthesis of both 6-O-methylglucosyl lipopolysaccharides (MGLP) and glycogen. May also use ADP-glucose as substrate. The chain is Glycogen synthase from Mycobacterium tuberculosis (strain CDC 1551 / Oshkosh).